The primary structure comprises 322 residues: Cyanophycinase (322 aa).

Residues Ser178, Glu196, and His220 each act as charge relay system in the active site.

This sequence belongs to the peptidase S51 family.

It carries out the reaction [L-4-(L-arginin-2-N-yl)aspartate](n) + H2O = [L-4-(L-arginin-2-N-yl)aspartate](n-1) + L-4-(L-arginin-2-N-yl)aspartate. In terms of biological role, exopeptidase that catalyzes the hydrolytic cleavage of multi-L-arginyl-poly-L-aspartic acid (cyanophycin; a water-insoluble reserve polymer) into aspartate-arginine dipeptides. The chain is Cyanophycinase (cphB) from Synechococcus elongatus.